Here is a 244-residue protein sequence, read N- to C-terminus: 1-(5-phosphoribosyl)-5-[(5-phosphoribosylamino)methylideneamino] imidazole-4-carboxamide isomerase (244 aa).

Asp-7 serves as the catalytic Proton acceptor. Catalysis depends on Asp-129, which acts as the Proton donor.

The protein belongs to the HisA/HisF family.

The protein resides in the cytoplasm. It carries out the reaction 1-(5-phospho-beta-D-ribosyl)-5-[(5-phospho-beta-D-ribosylamino)methylideneamino]imidazole-4-carboxamide = 5-[(5-phospho-1-deoxy-D-ribulos-1-ylimino)methylamino]-1-(5-phospho-beta-D-ribosyl)imidazole-4-carboxamide. The protein operates within amino-acid biosynthesis; L-histidine biosynthesis; L-histidine from 5-phospho-alpha-D-ribose 1-diphosphate: step 4/9. The chain is 1-(5-phosphoribosyl)-5-[(5-phosphoribosylamino)methylideneamino] imidazole-4-carboxamide isomerase from Pseudoalteromonas atlantica (strain T6c / ATCC BAA-1087).